A 704-amino-acid polypeptide reads, in one-letter code: Polyribonucleotide nucleotidyltransferase (704 aa).

2 residues coordinate Mg(2+): aspartate 487 and aspartate 493. Residues 554–613 (PRLLTIKIHPDKIREVIGKGGSTIQAITKETGTQIDIQDDGTIIIASVNAIAAQAAKSRI) form the KH domain. Residues 623 to 691 (GRIYEGKVAK…KQGRIRLSIK (69 aa)) form the S1 motif domain.

The protein belongs to the polyribonucleotide nucleotidyltransferase family. In terms of assembly, component of the RNA degradosome, which is a multiprotein complex involved in RNA processing and mRNA degradation. Mg(2+) is required as a cofactor.

It localises to the cytoplasm. The catalysed reaction is RNA(n+1) + phosphate = RNA(n) + a ribonucleoside 5'-diphosphate. In terms of biological role, involved in mRNA degradation. Catalyzes the phosphorolysis of single-stranded polyribonucleotides processively in the 3'- to 5'-direction. This is Polyribonucleotide nucleotidyltransferase from Xanthomonas campestris pv. campestris (strain 8004).